We begin with the raw amino-acid sequence, 357 residues long: UDP-N-acetylglucosamine--N-acetylmuramyl-(pentapeptide) pyrophosphoryl-undecaprenol N-acetylglucosamine transferase (357 aa).

UDP-N-acetyl-alpha-D-glucosamine is bound by residues 13–15 (TGG), Asn125, Arg161, Ser189, Ile243, and Gln288.

Belongs to the glycosyltransferase 28 family. MurG subfamily.

It localises to the cell inner membrane. It catalyses the reaction di-trans,octa-cis-undecaprenyl diphospho-N-acetyl-alpha-D-muramoyl-L-alanyl-D-glutamyl-meso-2,6-diaminopimeloyl-D-alanyl-D-alanine + UDP-N-acetyl-alpha-D-glucosamine = di-trans,octa-cis-undecaprenyl diphospho-[N-acetyl-alpha-D-glucosaminyl-(1-&gt;4)]-N-acetyl-alpha-D-muramoyl-L-alanyl-D-glutamyl-meso-2,6-diaminopimeloyl-D-alanyl-D-alanine + UDP + H(+). The protein operates within cell wall biogenesis; peptidoglycan biosynthesis. Functionally, cell wall formation. Catalyzes the transfer of a GlcNAc subunit on undecaprenyl-pyrophosphoryl-MurNAc-pentapeptide (lipid intermediate I) to form undecaprenyl-pyrophosphoryl-MurNAc-(pentapeptide)GlcNAc (lipid intermediate II). This is UDP-N-acetylglucosamine--N-acetylmuramyl-(pentapeptide) pyrophosphoryl-undecaprenol N-acetylglucosamine transferase from Bordetella pertussis (strain Tohama I / ATCC BAA-589 / NCTC 13251).